We begin with the raw amino-acid sequence, 118 residues long: Ribonuclease P protein component (118 aa).

This sequence belongs to the RnpA family. Consists of a catalytic RNA component (M1 or rnpB) and a protein subunit.

It catalyses the reaction Endonucleolytic cleavage of RNA, removing 5'-extranucleotides from tRNA precursor.. In terms of biological role, RNaseP catalyzes the removal of the 5'-leader sequence from pre-tRNA to produce the mature 5'-terminus. It can also cleave other RNA substrates such as 4.5S RNA. The protein component plays an auxiliary but essential role in vivo by binding to the 5'-leader sequence and broadening the substrate specificity of the ribozyme. The polypeptide is Ribonuclease P protein component (Photobacterium profundum (strain SS9)).